Consider the following 527-residue polypeptide: Transcription factor bHLH157 (527 aa).

2 disordered regions span residues 295–318 (SGVN…LFPQ) and 335–368 (SSIG…KDRQ). Positions 307–318 (TSSAHSSSLFPQ) are enriched in polar residues. A Nuclear localization signal motif is present at residues 341-348 (WKKPHEEG). Positions 343 to 368 (KPHEEGVKKKRAKAGESRRPRPKDRQ) are enriched in basic and acidic residues. The bHLH domain occupies 354–403 (AKAGESRRPRPKDRQMIQDRIKELRGMIPNGAKCSIDTLLDLTIKHMVFM).

Belongs to the bHLH protein family. LHW subfamily. As to quaternary structure, homodimer.

Its subcellular location is the nucleus. Functionally, transcription factor that may regulate root development. In Arabidopsis thaliana (Mouse-ear cress), this protein is Transcription factor bHLH157 (BHLH157).